A 506-amino-acid polypeptide reads, in one-letter code: ATP synthase subunit alpha (506 aa).

Glycine 170–threonine 177 contacts ATP.

Belongs to the ATPase alpha/beta chains family. As to quaternary structure, F-type ATPases have 2 components, CF(1) - the catalytic core - and CF(0) - the membrane proton channel. CF(1) has five subunits: alpha(3), beta(3), gamma(1), delta(1), epsilon(1). CF(0) has four main subunits: a(1), b(1), b'(1) and c(9-12).

It localises to the cellular thylakoid membrane. It carries out the reaction ATP + H2O + 4 H(+)(in) = ADP + phosphate + 5 H(+)(out). In terms of biological role, produces ATP from ADP in the presence of a proton gradient across the membrane. The alpha chain is a regulatory subunit. The chain is ATP synthase subunit alpha from Synechococcus sp. (strain CC9902).